Here is a 357-residue protein sequence, read N- to C-terminus: DNA integrity scanning protein DisA (357 aa).

A DAC domain is found at 8 to 146; sequence VKSMINILQL…GNLRYTLKDI (139 aa). ATP is bound by residues Gly-75, Leu-93, and 106-110; that span reads MRHRT.

This sequence belongs to the DisA family. In terms of assembly, homooctamer. Mg(2+) is required as a cofactor.

It carries out the reaction 2 ATP = 3',3'-c-di-AMP + 2 diphosphate. Its function is as follows. Participates in a DNA-damage check-point that is active prior to asymmetric division when DNA is damaged. DisA forms globular foci that rapidly scan along the chromosomes during sporulation, searching for lesions. When a lesion is present, DisA pauses at the lesion site. This triggers a cellular response that culminates in a temporary block in sporulation initiation. Also has diadenylate cyclase activity, catalyzing the condensation of 2 ATP molecules into cyclic di-AMP (c-di-AMP). c-di-AMP acts as a signaling molecule that couples DNA integrity with progression of sporulation. The rise in c-di-AMP level generated by DisA while scanning the chromosome, operates as a positive signal that advances sporulation; upon encountering a lesion, the DisA focus arrests at the damaged site and halts c-di-AMP synthesis. In Bacillus cereus (strain AH187), this protein is DNA integrity scanning protein DisA.